A 411-amino-acid polypeptide reads, in one-letter code: L-cysteine:1D-myo-inositol 2-amino-2-deoxy-alpha-D-glucopyranoside ligase (411 aa).

Cys43 is a binding site for Zn(2+). Residues 43-46 (CGIT), Thr58, and 81-83 (NVT) each bind L-cysteinyl-5'-AMP. A 'HIGH' region motif is present at residues 45 to 55 (ITPYDATHLGH). Residues 186–191 (QRGGDP) carry the 'ERGGDP' region motif. Trp226 contributes to the L-cysteinyl-5'-AMP binding site. Zn(2+) is bound at residue Cys230. 248–250 (GSD) contacts L-cysteinyl-5'-AMP. Residue His255 participates in Zn(2+) binding. L-cysteinyl-5'-AMP is bound at residue Ile282. A 'KMSKS' region motif is present at residues 288 to 292 (KMSKS).

Belongs to the class-I aminoacyl-tRNA synthetase family. MshC subfamily. Monomer. Requires Zn(2+) as cofactor.

The enzyme catalyses 1D-myo-inositol 2-amino-2-deoxy-alpha-D-glucopyranoside + L-cysteine + ATP = 1D-myo-inositol 2-(L-cysteinylamino)-2-deoxy-alpha-D-glucopyranoside + AMP + diphosphate + H(+). Its function is as follows. Catalyzes the ATP-dependent condensation of GlcN-Ins and L-cysteine to form L-Cys-GlcN-Ins. The protein is L-cysteine:1D-myo-inositol 2-amino-2-deoxy-alpha-D-glucopyranoside ligase of Mycobacterium ulcerans (strain Agy99).